We begin with the raw amino-acid sequence, 100 residues long: Large ribosomal subunit protein uL23 (100 aa).

The protein belongs to the universal ribosomal protein uL23 family. In terms of assembly, part of the 50S ribosomal subunit. Contacts protein L29, and trigger factor when it is bound to the ribosome.

Functionally, one of the early assembly proteins it binds 23S rRNA. One of the proteins that surrounds the polypeptide exit tunnel on the outside of the ribosome. Forms the main docking site for trigger factor binding to the ribosome. In Bradyrhizobium diazoefficiens (strain JCM 10833 / BCRC 13528 / IAM 13628 / NBRC 14792 / USDA 110), this protein is Large ribosomal subunit protein uL23.